A 229-amino-acid chain; its full sequence is Potassium/proton antiporter CemA (229 aa).

2 helical membrane passes run 7–27 and 107–127; these read FTPL…SFSV and ILHF…SILG.

Belongs to the CemA family.

The protein resides in the plastid. The protein localises to the chloroplast inner membrane. It carries out the reaction K(+)(in) + H(+)(out) = K(+)(out) + H(+)(in). Its function is as follows. Contributes to K(+)/H(+) antiport activity by supporting proton efflux to control proton extrusion and homeostasis in chloroplasts in a light-dependent manner to modulate photosynthesis. Prevents excessive induction of non-photochemical quenching (NPQ) under continuous-light conditions. Indirectly promotes efficient inorganic carbon uptake into chloroplasts. The polypeptide is Potassium/proton antiporter CemA (Solanum tuberosum (Potato)).